Consider the following 146-residue polypeptide: D-aminoacyl-tRNA deacylase (146 aa).

A Gly-cisPro motif, important for rejection of L-amino acids motif is present at residues 137-138 (GP).

It belongs to the DTD family. Homodimer.

The protein localises to the cytoplasm. The enzyme catalyses glycyl-tRNA(Ala) + H2O = tRNA(Ala) + glycine + H(+). It catalyses the reaction a D-aminoacyl-tRNA + H2O = a tRNA + a D-alpha-amino acid + H(+). Functionally, an aminoacyl-tRNA editing enzyme that deacylates mischarged D-aminoacyl-tRNAs. Also deacylates mischarged glycyl-tRNA(Ala), protecting cells against glycine mischarging by AlaRS. Acts via tRNA-based rather than protein-based catalysis; rejects L-amino acids rather than detecting D-amino acids in the active site. By recycling D-aminoacyl-tRNA to D-amino acids and free tRNA molecules, this enzyme counteracts the toxicity associated with the formation of D-aminoacyl-tRNA entities in vivo and helps enforce protein L-homochirality. The chain is D-aminoacyl-tRNA deacylase from Bacillus thuringiensis subsp. konkukian (strain 97-27).